The chain runs to 64 residues: Putative antitoxin AF_1074 (64 aa).

Belongs to the UPF0165 family.

Functionally, possibly the antitoxin component of a type II toxin-antitoxin (TA) system. In Archaeoglobus fulgidus (strain ATCC 49558 / DSM 4304 / JCM 9628 / NBRC 100126 / VC-16), this protein is Putative antitoxin AF_1074.